Here is a 282-residue protein sequence, read N- to C-terminus: MSLLATLGLELDRALLPASGLGWLVDYGKLPPAPAPLAPYEVLGGALEGGLPVGGEPLAGDGFSDWMTERVDFTALLPLEPPLPPGTLPQPSPTPPDLEAMASLLKKELEQMEDFFLDAPPLPPPSPPPLPPPPLPPAPSLPLSLPSFDLPQPPVLDTLDLLAIYCRNEAGQEEVGMPPLPPPQQPPPPSPPQPSRLAPYPHPATTRGDRKQKKRDQNKSAALRYRQRKRAEGEALEGECQGLEARNRELKERAESVEREIQYVKDLLIEVYKARSQRTRSC.

The tract at residues 1-21 is required for protein stabilization induced by IL1B; the sequence is MSLLATLGLELDRALLPASGL. Lysine 29 carries the N6-acetyllysine; by EP300 modification. 2 disordered regions span residues 116-152 and 173-238; these read FLDAPPLPPPSPPPLPPPPLPPAPSLPLSLPSFDLPQ and EEVG…ALEG. The segment at 119 to 217 is interaction with PTP4A1; sequence APPLPPPSPP…GDRKQKKRDQ (99 aa). The segment covering 120–140 has biased composition (pro residues); that stretch reads PPLPPPSPPPLPPPPLPPAPS. Residues 141–150 are compositionally biased toward low complexity; it reads LPLSLPSFDL. A compositionally biased stretch (pro residues) spans 178–194; sequence PPLPPPQQPPPPSPPQP. One can recognise a bZIP domain in the interval 208–271; it reads GDRKQKKRDQ…QYVKDLLIEV (64 aa). A basic motif region spans residues 210 to 230; that stretch reads RKQKKRDQNKSAALRYRQRKR. The interval 236-250 is leucine-zipper; sequence LEGECQGLEARNREL. At serine 256 the chain carries Phosphoserine.

Belongs to the bZIP family. Binds DNA as a dimer. Interacts with PTP4A1/PRL-1. Interacts with CCND3, but not with CCND1 or CCND2. Interacts with HSPA1A or HSPA1B; the interaction protects ATF5 from degradation via proteasome-dependent and caspase-dependent processes. Interacts (via C-terminal region) with NPM1 (via C-terminal region); the interaction leads to loss of association between HSPA1A or HSPA1B and ATF5 and promotes ATF5 degradation via proteasome-dependent and caspase-dependent processes. Interacts with NLK; the interaction stabilizes ATF5 at the protein level in a kinase-independent manner. Interacts with alpha-tubulin, gamma-tubulin members TUBGCP2 and TUBGCP4, PCNT; the ATF5:PCNT:polyglutamylated tubulin (PGT) tripartite unites the mother centriole and the pericentriolar material (PCM) in the centrosome. Interacts with CEBPB and EP300; EP300 is required for ATF5 and CEBPB interaction and DNA binding. Post-translationally, ubiquitinated by CDC34 and UBE2B in order to be degraded by the proteasome. Cisplatin inhibits ubiquitination and proteasome-mediated degradation by inhibiting the interaction with CDC34. Ubiquitination and degradation by the proteasome are inhibited by NLK in a kinase-independent manner. Phosphorylated by NLK, probably at Ser-92, Thr-94, Ser-126 and Ser-190. In terms of processing, acetylated at Lys-29 by EP300, the acetylation enhances the interaction with CEBPB, DNA-binding and transactivation activity. Widely expressed with higher expression levels in liver.

It is found in the cytoplasm. The protein localises to the nucleus. It localises to the cytoskeleton. Its subcellular location is the microtubule organizing center. The protein resides in the centrosome. Transcription factor that either stimulates or represses gene transcription through binding of different DNA regulatory elements such as cAMP response element (CRE) (consensus: 5'-GTGACGT[AC][AG]-3'), ATF5-specific response element (ARE) (consensus: 5'-C[CT]TCT[CT]CCTT[AT]-3') but also the amino acid response element (AARE), present in many viral and cellular promoters. Critically involved, often in a cell type-dependent manner, in cell survival, proliferation, and differentiation. Its transcriptional activity is enhanced by CCND3 and slightly inhibited by CDK4. Important regulator of the cerebral cortex formation, functions in cerebral cortical neuroprogenitor cells to maintain proliferation and to block differentiation into neurons. Must be down-regulated in order for such cells to exit the cycle and differentiate. Participates in the pathways by which SHH promotes cerebellar granule neuron progenitor cells proliferation. Critical for survival of mature olfactory sensory neurons (OSN), directs expression of OSN-specific genes. May be involved in osteogenic differentiation. Promotes cell proliferation and survival by inducing the expression of EGR1 sinergistically with ELK1. Once acetylated by EP300, binds to ARE sequences on target genes promoters, such as BCL2 and EGR1. Plays an anti-apoptotic role through the transcriptional regulation of BCL2, this function seems to be cell type-dependent. Cooperates with NR1I3/CAR in the transcriptional activation of CYP2B6 in liver. In hepatic cells, represses CRE-dependent transcription and inhibits proliferation by blocking at G2/M phase. May act as a negative regulator of IL1B transduction pathway in liver. Upon IL1B stimulus, cooperates with NLK to activate the transactivation activity of C/EBP subfamily members. Besides its function of transcription factor, acts as a cofactor of CEBPB to activate CEBPA and promote adipocyte differentiation. Regulates centrosome dynamics in a cell-cycle- and centriole-age-dependent manner. Forms 9-foci symmetrical ring scaffold around the mother centriole to control centrosome function and the interaction between centrioles and pericentriolar material. The protein is Cyclic AMP-dependent transcription factor ATF-5 (ATF5) of Homo sapiens (Human).